A 188-amino-acid polypeptide reads, in one-letter code: Sulfopyruvate decarboxylase subunit beta (188 aa).

The protein belongs to the TPP enzyme family. Heterododecamer composed of 6 subunits alpha and 6 subunits beta. Thiamine diphosphate is required as a cofactor.

It carries out the reaction 3-sulfopyruvate + H(+) = sulfoacetaldehyde + CO2. The protein operates within cofactor biosynthesis; coenzyme M biosynthesis; sulfoacetaldehyde from phosphoenolpyruvate and sulfite: step 4/4. With respect to regulation, inhibited by oxygen when heated in air at 80 degrees Celsius. The enzyme is reactivated by addition of dithionite. Its function is as follows. Involved in the biosynthesis of the coenzyme M (2-mercaptoethanesulfonic acid). Catalyzes the decarboxylation of sulfopyruvate to sulfoacetaldehyde. This chain is Sulfopyruvate decarboxylase subunit beta, found in Methanocaldococcus jannaschii (strain ATCC 43067 / DSM 2661 / JAL-1 / JCM 10045 / NBRC 100440) (Methanococcus jannaschii).